An 844-amino-acid polypeptide reads, in one-letter code: Protein translocase subunit SecA (844 aa).

Residues Gln87, 105 to 109, and Asp495 contribute to the ATP site; that span reads GEGKT. The span at 783–800 shows a compositional bias: basic and acidic residues; that stretch reads QAPPEELKQEFKHKEEPK. The segment at 783 to 844 is disordered; the sequence is QAPPEELKQE…GQKYKKCCGA (62 aa). Polar residues predominate over residues 802-811; that stretch reads LNYSGAQKET. Residues 816-826 are compositionally biased toward basic and acidic residues; that stretch reads PERRGEPKVGR. Zn(2+) contacts are provided by Cys830, Cys832, Cys841, and Cys842.

This sequence belongs to the SecA family. Monomer and homodimer. Part of the essential Sec protein translocation apparatus which comprises SecA, SecYEG and auxiliary proteins SecDF-YajC and YidC. The cofactor is Zn(2+).

The protein resides in the cell inner membrane. It localises to the cytoplasm. It catalyses the reaction ATP + H2O + cellular proteinSide 1 = ADP + phosphate + cellular proteinSide 2.. In terms of biological role, part of the Sec protein translocase complex. Interacts with the SecYEG preprotein conducting channel. Has a central role in coupling the hydrolysis of ATP to the transfer of proteins into and across the cell membrane, serving as an ATP-driven molecular motor driving the stepwise translocation of polypeptide chains across the membrane. This Nitratidesulfovibrio vulgaris (strain DSM 19637 / Miyazaki F) (Desulfovibrio vulgaris) protein is Protein translocase subunit SecA.